The following is a 383-amino-acid chain: Putative glutamate--cysteine ligase 2-1 (383 aa).

It belongs to the glutamate--cysteine ligase type 2 family. YbdK subfamily.

It carries out the reaction L-cysteine + L-glutamate + ATP = gamma-L-glutamyl-L-cysteine + ADP + phosphate + H(+). In terms of biological role, ATP-dependent carboxylate-amine ligase which exhibits weak glutamate--cysteine ligase activity. The chain is Putative glutamate--cysteine ligase 2-1 from Nocardia farcinica (strain IFM 10152).